The sequence spans 138 residues: uncharacterized protein (138 aa).

Its subcellular location is the plastid. The protein localises to the chloroplast. This is an uncharacterized protein from Chlorella vulgaris (Green alga).